A 436-amino-acid chain; its full sequence is Prenyltransferase nscD (436 aa).

This sequence belongs to the tryptophan dimethylallyltransferase family.

Its pathway is secondary metabolite biosynthesis. Prenyltransferase; part of the gene cluster that mediates the biosynthesis of neosartoricin B, a prenylated anthracenone that probably exhibits T-cell antiproliferative activity, suggestive of a physiological role as an immunosuppressive agent. The non-reducing polyketide synthase nscA probably synthesizes and cyclizes the decaketide backbone. The hydrolase nscB then mediates the product release through hydrolysis followed by spontaneous decarboxylation. The prenyltransferase nscD catalyzes the addition of the dimethylallyl group to the aromatic C5. The FAD-dependent monooxygenase nscC is then responsible for the stereospecific hydroxylation at C2. Neosartoricin B can be converted into two additional compounds neosartoricins C and D. Neosartoricin C is a spirocyclic compound that is cyclized through the attack of C3 hydroxyl on C14, followed by dehydration. On the other hand, neosartoricin D is a further cyclized compound in which attack of C2 on C14 in neosartoricin C results in the formation of the acetal-containing dioxabicyclo-octanone ring. Both of these compounds are novel and possibly represent related metabolites of the gene cluster. This Arthroderma gypseum (strain ATCC MYA-4604 / CBS 118893) (Microsporum gypseum) protein is Prenyltransferase nscD.